The sequence spans 629 residues: MTSQFAAELCELLVEENFGELFGRIFATLSRYDRLNLPRLKAYSELPNRQLLPALAAMIQQHLVYHYTSYDDGVTYYEANMQSAYYLVRSGKILEFVEERLGKYAATVLSTIMYLGHAQVSYLETLPELTSEAVKANGVPEEHGEHEEDEEQSNGLNGEHSNEQPELLHPTLKALAAHGYIIRVREAQFQSHADNILDAERAIRSKPEMKALKGKRLEEAVIEGTLGLLKERTDGDLTRGLIVHGVPRGAKRKHSSRRADEPNKKCRTDFASVDENDEHDEEEENEWSDDEMGYDTTPMEVSARELYATVSERETEQGVSPATAKVYECLLRRIEYQTHQCRDTAEIPREGEEGEQYSVPIALSALAEDVNPQLDLSSSTGPMDSSQPDGRRGKRPWDGDVEGTNHEEANGLSSGGSGGNRTFEIDQHLSLLAQPPHNLTSKRMVSGLITWTVEFRHLARKLRHLELERMIEARYGDVALRVVRVLHAKGKLDEKRLQEISLLPFKDLRQVLASMQAGGFVDLQEVPRDAQRQPSRTIYLWYYDPDRICNSVLQDTYKAMSRCLQRLRFERSRIKDFLEKTERSDVKGNEQRFLSEPELVLLEQWRAKEALLLGEVARLDEMVAVMRDY.

Disordered regions lie at residues 136 to 164 (ANGV…SNEQ), 247 to 294 (PRGA…EMGY), and 373 to 420 (QLDL…SGGN). The span at 257-268 (RRADEPNKKCRT) shows a compositional bias: basic and acidic residues. The span at 272–293 (SVDENDEHDEEEENEWSDDEMG) shows a compositional bias: acidic residues. Residues 374–388 (LDLSSSTGPMDSSQP) are compositionally biased toward polar residues. A compositionally biased stretch (basic and acidic residues) spans 389-409 (DGRRGKRPWDGDVEGTNHEEA). A leucine-zipper region spans residues 556-577 (TYKAMSRCLQRLRFERSRIKDF).

Belongs to the RNA polymerase beta chain family. In terms of assembly, component of the RNA polymerase III (Pol III) complex consisting of 17 subunits.

It localises to the nucleus. Functionally, DNA-dependent RNA polymerase catalyzes the transcription of DNA into RNA using the four ribonucleoside triphosphates as substrates. Specific core component of RNA polymerase III which synthesizes small RNAs, such as 5S rRNA and tRNAs. This chain is DNA-directed RNA polymerase III subunit rpc3 (rpc82), found in Aspergillus fumigatus (strain ATCC MYA-4609 / CBS 101355 / FGSC A1100 / Af293) (Neosartorya fumigata).